Consider the following 471-residue polypeptide: Chromosomal replication initiator protein DnaA (471 aa).

A domain I, interacts with DnaA modulators region spans residues 1-77 (MELNSSFWTL…YTEISDTYGK (77 aa)). Residues 77–130 (KPFEVEFSITGNKINSHIETSTTPDEVLSGSEILQAQLARAQNIQPTQPRSSSD) are domain II. Residues 131–349 (TLNSELTFST…GNLKKVKMFS (219 aa)) form a domain III, AAA+ region region. ATP-binding residues include glycine 176, glycine 178, lysine 179, and threonine 180. The segment at 350–471 (ELQGLPIDHE…EQRIHNITRV (122 aa)) is domain IV, binds dsDNA.

The protein belongs to the DnaA family. As to quaternary structure, oligomerizes as a right-handed, spiral filament on DNA at oriC.

It localises to the cytoplasm. In terms of biological role, plays an essential role in the initiation and regulation of chromosomal replication. ATP-DnaA binds to the origin of replication (oriC) to initiate formation of the DNA replication initiation complex once per cell cycle. Binds the DnaA box (a 9 base pair repeat at the origin) and separates the double-stranded (ds)DNA. Forms a right-handed helical filament on oriC DNA; dsDNA binds to the exterior of the filament while single-stranded (ss)DNA is stabiized in the filament's interior. The ATP-DnaA-oriC complex binds and stabilizes one strand of the AT-rich DNA unwinding element (DUE), permitting loading of DNA polymerase. After initiation quickly degrades to an ADP-DnaA complex that is not apt for DNA replication. Binds acidic phospholipids. This is Chromosomal replication initiator protein DnaA from Bdellovibrio bacteriovorus (strain ATCC 15356 / DSM 50701 / NCIMB 9529 / HD100).